Reading from the N-terminus, the 90-residue chain is c-Myc-binding protein homolog (90 aa).

This sequence belongs to the AMY1 family.

It is found in the nucleus. The protein is c-Myc-binding protein homolog (mycbp) of Dictyostelium discoideum (Social amoeba).